Reading from the N-terminus, the 332-residue chain is Probable class II chitinase ARB_00204 (332 aa).

The signal sequence occupies residues 1-18 (MKTPFTILAALTVATTLA). One can recognise a GH18 domain in the interval 19–331 (DVPDEWDIIE…NPHRKYLDSF (313 aa)). E118 functions as the Proton donor in the catalytic mechanism. A glycan (N-linked (GlcNAc...) asparagine) is linked at N245.

Belongs to the glycosyl hydrolase 18 family. Chitinase class II subfamily.

It is found in the secreted. The catalysed reaction is Random endo-hydrolysis of N-acetyl-beta-D-glucosaminide (1-&gt;4)-beta-linkages in chitin and chitodextrins.. Its function is as follows. Degrades chitin and chitotriose. This chain is Probable class II chitinase ARB_00204, found in Arthroderma benhamiae (strain ATCC MYA-4681 / CBS 112371) (Trichophyton mentagrophytes).